A 165-amino-acid polypeptide reads, in one-letter code: Growth arrest and DNA damage-inducible protein GADD45 alpha (165 aa).

The residue at position 2 (Thr2) is a Phosphothreonine.

This sequence belongs to the GADD45 family. As to quaternary structure, interacts with AURKA, PCNA, GADD45GIP1 and MAPK14.

The protein localises to the nucleus. Functionally, might affect PCNA interaction with some CDK (cell division protein kinase) complexes; stimulates DNA excision repair in vitro and inhibits entry of cells into S phase. In T-cells, functions as a regulator of p38 MAPKs by inhibiting p88 phosphorylation and activity. The polypeptide is Growth arrest and DNA damage-inducible protein GADD45 alpha (GADD45A) (Bos taurus (Bovine)).